We begin with the raw amino-acid sequence, 395 residues long: Phosphatidylinositol 4-phosphate 5-kinase-like protein 1 (395 aa).

Residues 1-25 are disordered; the sequence is MATPSLRSHEIPAHSQEAGNKSISS. In terms of domain architecture, PIPK spans 37 to 394; the sequence is ARQSRVGLFE…RLCRWAEVHT (358 aa).

As to quaternary structure, interacts with type I phosphatidylinositol 4-phosphate 5-kinases, including PIP5K1A and PIP5K1B. As to expression, highly expressed in brain and testis, relatively to heart, spleen, lung, liver, skeletal muscle and kidney.

It is found in the cytoplasm. The protein resides in the membrane. Its function is as follows. May act as a scaffold to localize and regulate type I phosphatidylinositol 4-phosphate 5-kinases to specific compartments within the cell, where they generate PI(4,5)P2 for actin nucleation, signaling and scaffold protein recruitment and conversion to PI(3,4,5)P3. The chain is Phosphatidylinositol 4-phosphate 5-kinase-like protein 1 (Pip5kl1) from Mus musculus (Mouse).